A 429-amino-acid chain; its full sequence is 3-phosphoshikimate 1-carboxyvinyltransferase (429 aa).

Residues Lys-23, Ser-24, and Arg-28 each contribute to the 3-phosphoshikimate site. Residue Lys-23 coordinates phosphoenolpyruvate. Gly-97 and Arg-125 together coordinate phosphoenolpyruvate. 3-phosphoshikimate contacts are provided by Ser-170, Ser-171, Gln-172, Ser-198, Asp-314, Asn-338, and Lys-342. Phosphoenolpyruvate is bound at residue Gln-172. Residue Asp-314 is the Proton acceptor of the active site. 3 residues coordinate phosphoenolpyruvate: Arg-346, Arg-388, and Lys-413.

It belongs to the EPSP synthase family. In terms of assembly, monomer.

It localises to the cytoplasm. It catalyses the reaction 3-phosphoshikimate + phosphoenolpyruvate = 5-O-(1-carboxyvinyl)-3-phosphoshikimate + phosphate. The protein operates within metabolic intermediate biosynthesis; chorismate biosynthesis; chorismate from D-erythrose 4-phosphate and phosphoenolpyruvate: step 6/7. Its function is as follows. Catalyzes the transfer of the enolpyruvyl moiety of phosphoenolpyruvate (PEP) to the 5-hydroxyl of shikimate-3-phosphate (S3P) to produce enolpyruvyl shikimate-3-phosphate and inorganic phosphate. The protein is 3-phosphoshikimate 1-carboxyvinyltransferase of Pectobacterium carotovorum subsp. carotovorum (strain PC1).